Consider the following 273-residue polypeptide: Ethanolamine ammonia-lyase small subunit (273 aa).

Adenosylcob(III)alamin contacts are provided by Val-164, Glu-185, and Cys-214.

It belongs to the EutC family. The basic unit is a heterodimer which dimerizes to form tetramers. The heterotetramers trimerize; 6 large subunits form a core ring with 6 small subunits projecting outwards. Requires adenosylcob(III)alamin as cofactor.

It localises to the bacterial microcompartment. It carries out the reaction ethanolamine = acetaldehyde + NH4(+). It participates in amine and polyamine degradation; ethanolamine degradation. Functionally, catalyzes the deamination of various vicinal amino-alcohols to oxo compounds. Allows this organism to utilize ethanolamine as the sole source of nitrogen and carbon in the presence of external vitamin B12. In Pseudomonas paraeruginosa (strain DSM 24068 / PA7) (Pseudomonas aeruginosa (strain PA7)), this protein is Ethanolamine ammonia-lyase small subunit.